A 118-amino-acid polypeptide reads, in one-letter code: Hydrogenase maturation factor HypA (118 aa).

Histidine 2 contributes to the Ni(2+) binding site. Zn(2+) is bound by residues cysteine 73, cysteine 76, cysteine 90, and cysteine 93.

Belongs to the HypA/HybF family.

In terms of biological role, involved in the maturation of [NiFe] hydrogenases. Required for nickel insertion into the metal center of the hydrogenase. The sequence is that of Hydrogenase maturation factor HypA from Salmonella typhi.